The sequence spans 349 residues: Heat-inducible transcription repressor HrcA (349 aa).

Belongs to the HrcA family.

Functionally, negative regulator of class I heat shock genes (grpE-dnaK-dnaJ and groELS operons). Prevents heat-shock induction of these operons. This Xylella fastidiosa (strain 9a5c) protein is Heat-inducible transcription repressor HrcA.